The sequence spans 156 residues: Tripartite terminase subunit 2 (156 aa).

Positions 1–37 are disordered; sequence MYESENASEHHPELEDVFSENTGDSNPSMGSSDSTRS. The segment covering 19–37 has biased composition (polar residues); that stretch reads SENTGDSNPSMGSSDSTRS.

Belongs to the herpesviridae TRM2 protein family. In terms of assembly, associates with TRM1 and TRM3 to form the tripartite terminase complex.

Its subcellular location is the host nucleus. Component of the molecular motor that translocates viral genomic DNA in empty capsid during DNA packaging. Forms a tripartite terminase complex together with TRM1 and TRM3 in the host cytoplasm. Once the complex reaches the host nucleus, it interacts with the capsid portal vertex. This portal forms a ring in which genomic DNA is translocated into the capsid. In Varicella-zoster virus (strain Dumas) (HHV-3), this protein is Tripartite terminase subunit 2.